The chain runs to 318 residues: E3 ubiquitin-protein ligase NRDP1 (318 aa).

The RING-type; degenerate zinc finger occupies 18 to 57 (CPICSGVLEEPVRAPHCEHAFCNACITQWFAQQQICPVDR). An SIAH-type; degenerate zinc finger spans residues 78 to 138 (KLQISCDNAG…MPNHNCIKHL (61 aa)).

The catalysed reaction is S-ubiquitinyl-[E2 ubiquitin-conjugating enzyme]-L-cysteine + [acceptor protein]-L-lysine = [E2 ubiquitin-conjugating enzyme]-L-cysteine + N(6)-ubiquitinyl-[acceptor protein]-L-lysine.. Its pathway is protein modification; protein ubiquitination. Acts as E3 ubiquitin-protein ligase and regulates the degradation of target proteins. This chain is E3 ubiquitin-protein ligase NRDP1 (rnf41), found in Danio rerio (Zebrafish).